Reading from the N-terminus, the 595-residue chain is MEMYETLGKVGEGSYGTVMKCKHKDTGRIVAIKIFYEKPEKSVNKIATREIKFLKQFRHENLVNLIEVFRQKKKIHLVFEFIDHTVLDELQHYCHGLESKRLRKYLFQILRAIEYLHNNNIIHRDIKPENILVSQSGITKLCDFGFARTLAAPGDVYTDYVATRWYRAPELVLKDTSYGKPVDIWALGCMIIEMATGHPFLPSSSDLDLLHKIVLKVGNLTPHLHNIFSKSPIFAGVVLPQVQHPKTARKKYPKLNGLLADIVHACLQIDPAERTSSTDLLRHDYFTRDGFIEKFIPELRAKLLQEAKVNSFIKPKENFKENEPVRDEKKSVFTNTLLYGNPSLYGKEVDRDKRAKELKVRVIKAKGGKGDVPDQKKPEYEGDHRQQGTADDTQPSSLDKKPSVLELTNPLNPSENSDGVKEDPHAGGCMIMPPINLTSSNLLAANLSSNLSHPNSRLTERTKKRRTSSQTIGQTLSNSRQEDTGPTQVQTEKGAFNERTGQNDQISSGNKRKLNFPKCDRKEFHFPELPFTVQAKEMKGMEVKQIKVLKRESKKTDSSKIPTLLSMDPNQEKQEGGDGDCEGKNLKRNRFFFSR.

Residues 4 to 286 (YETLGKVGEG…STDLLRHDYF (283 aa)) form the Protein kinase domain. Residues 10–18 (VGEGSYGTV) and Lys-33 each bind ATP. The [NKR]KIAxRE signature appears at 45–51 (KIATREI). Asp-125 (proton acceptor) is an active-site residue. Position 158 is a phosphothreonine (Thr-158). Tyr-160 is modified (phosphotyrosine). Disordered regions lie at residues 362 to 427 (VIKA…PHAG), 448 to 513 (SSNL…NKRK), and 551 to 586 (RESK…GKNL). The segment covering 368 to 386 (GKGDVPDQKKPEYEGDHRQ) has biased composition (basic and acidic residues). The span at 387 to 397 (QGTADDTQPSS) shows a compositional bias: polar residues. Low complexity predominate over residues 448 to 457 (SSNLSHPNSR). Polar residues-rich tracts occupy residues 468-491 (SSQT…QVQT) and 499-509 (RTGQNDQISSG). Residues 570-585 (NQEKQEGGDGDCEGKN) show a composition bias toward basic and acidic residues.

Belongs to the protein kinase superfamily. CMGC Ser/Thr protein kinase family. CDC2/CDKX subfamily.

It localises to the cytoplasm. It carries out the reaction L-seryl-[protein] + ATP = O-phospho-L-seryl-[protein] + ADP + H(+). The catalysed reaction is L-threonyl-[protein] + ATP = O-phospho-L-threonyl-[protein] + ADP + H(+). This is Cyclin-dependent kinase-like 3 from Mus musculus (Mouse).